The primary structure comprises 446 residues: tRNA-2-methylthio-N(6)-dimethylallyladenosine synthase (446 aa).

The MTTase N-terminal domain occupies 3 to 124; it reads KKLYIKTYGC…LPELISKVVR (122 aa). Positions 12, 48, 87, 162, 166, and 169 each coordinate [4Fe-4S] cluster. Residues 148–380 form the Radical SAM core domain; the sequence is YPQGASAFIS…QKELSSQQLA (233 aa). The TRAM domain maps to 383–446; it reads ESCVGSTMKV…SNSLTGEIYT (64 aa).

This sequence belongs to the methylthiotransferase family. MiaB subfamily. Monomer. It depends on [4Fe-4S] cluster as a cofactor.

The protein resides in the cytoplasm. The enzyme catalyses N(6)-dimethylallyladenosine(37) in tRNA + (sulfur carrier)-SH + AH2 + 2 S-adenosyl-L-methionine = 2-methylsulfanyl-N(6)-dimethylallyladenosine(37) in tRNA + (sulfur carrier)-H + 5'-deoxyadenosine + L-methionine + A + S-adenosyl-L-homocysteine + 2 H(+). In terms of biological role, catalyzes the methylthiolation of N6-(dimethylallyl)adenosine (i(6)A), leading to the formation of 2-methylthio-N6-(dimethylallyl)adenosine (ms(2)i(6)A) at position 37 in tRNAs that read codons beginning with uridine. The chain is tRNA-2-methylthio-N(6)-dimethylallyladenosine synthase from Rickettsia canadensis (strain McKiel).